The chain runs to 167 residues: uncharacterized protein (167 aa).

2 helical membrane-spanning segments follow: residues 21 to 41 (KIGLAIFLIGAFINLIHIYKP) and 87 to 107 (MIITFILVQTTLITLDLYVFG). Residues 136–159 (RKQRLKEQREKKEQKKEQKKEKKT) are compositionally biased toward basic and acidic residues. Residues 136–167 (RKQRLKEQREKKEQKKEQKKEKKTERRKKKKL) are disordered.

Its subcellular location is the membrane. This is an uncharacterized protein from Schizosaccharomyces pombe (strain 972 / ATCC 24843) (Fission yeast).